The following is a 382-amino-acid chain: Sphingoid long-chain base transporter RSB1 (382 aa).

At 1–34 (MSNATNNTLGSLLPQLEAAANSNSLYGGMVPNLR) the chain is on the extracellular side. 2 N-linked (GlcNAc...) asparagine glycosylation sites follow: Asn3 and Asn6. Residues 35-55 (FNITMIVIWGILLTIHVVQLL) form a helical membrane-spanning segment. At 56–57 (MR) the chain is on the cytoplasmic side. The helical transmembrane segment at 58-78 (QYWFSIAFICTGILEVLGYIG) threads the bilayer. Residues 79 to 90 (RTWSHSNVADMD) lie on the Extracellular side of the membrane. Residues 91–111 (AFLLNMICLTIAPVFTMGGIY) form a helical membrane-spanning segment. Over 112 to 135 (YQLAKLIEVYGHRFSLLPSPMAYS) the chain is Cytoplasmic. Residues 136–156 (FIFICSDIVSLVVQAVGGGLC) traverse the membrane as a helical segment. The Extracellular segment spans residues 157–171 (GVAVTDGTSTTTGNH). The helical transmembrane segment at 172–192 (VFIAGLAIQVASMAIFLMLWF) threads the bilayer. Residues 193–241 (HFLFRIYISVRWEHINSRPISLSLLKISQTEVDYLYREKFHFLRLEPKR) are Cytoplasmic-facing. A helical transmembrane segment spans residues 242 to 262 (WVFHYFNLAMTVAVLTIFTRC). The Extracellular portion of the chain corresponds to 263–281 (CYRLAELVVGWDGYLITHE). A helical transmembrane segment spans residues 282–302 (WYFIILDALMMAIATVTLTIF). The Cytoplasmic segment spans residues 303–382 (HPGFAFKGRS…LFSSKKKAKL (80 aa)).

Belongs to the lipid-translocating exporter (LTE) (TC 9.A.26.1) family.

The protein localises to the cell membrane. Functionally, catalyzes the ATP-dependent translocation of sphingoid long-chain bases (LCBs) from the cytoplasmic site toward the extracytoplasmic side of the membrane (flip-flop). Involved in the establishment of the functional lipid asymmetry of the plasma membrane. Regulates intracellular levels of LCBs, sphingolipid precursors that are growth inhibitory at increased levels. This Saccharomyces cerevisiae (strain Lalvin EC1118 / Prise de mousse) (Baker's yeast) protein is Sphingoid long-chain base transporter RSB1 (RSB1).